A 171-amino-acid chain; its full sequence is MEHSTFLSGLVLATLLSQVSPFKIPIEELEDRVFVNCNTSITWVEGTVGTLLSDITRLDLGKRILDPRGIYRCNGTDIYKDKESTVQVHYRMCQSCVELDPATVAGIIVTDVIATLLLALGVFCFAGHETGRLSGAADTQALLRNDQVYQPLRDRDDAQYSHLGGNWARNK.

The first 21 residues, 1–21 (MEHSTFLSGLVLATLLSQVSP), serve as a signal peptide directing secretion. The Extracellular segment spans residues 22-105 (FKIPIEELED…CVELDPATVA (84 aa)). Cysteines 37 and 73 form a disulfide. 2 N-linked (GlcNAc...) asparagine glycosylation sites follow: Asn38 and Asn74. The helical transmembrane segment at 106–126 (GIIVTDVIATLLLALGVFCFA) threads the bilayer. Residues 127–171 (GHETGRLSGAADTQALLRNDQVYQPLRDRDDAQYSHLGGNWARNK) are Cytoplasmic-facing. The ITAM domain occupies 138 to 166 (DTQALLRNDQVYQPLRDRDDAQYSHLGGN). Residues Tyr149 and Tyr160 each carry the phosphotyrosine modification.

The TCR-CD3 complex is composed of a CD3D/CD3E and a CD3G/CD3E heterodimers that preferentially associate with TCRalpha and TCRbeta, respectively, to form TCRalpha/CD3E/CD3G and TCRbeta/CD3G/CD3E trimers. In turn, the hexamer interacts with CD3Z homodimer to form the TCR-CD3 complex. Alternatively, TCRalpha and TCRbeta can be replaced by TCRgamma and TCRdelta. Interacts with coreceptors CD4 and CD8. Phosphorylated on Tyr residues after T-cell receptor triggering by LCK in association with CD4/CD8. In terms of tissue distribution, CD3D is mostly present on T-lymphocytes with its TCR-CD3 partners. Present also in fetal NK-cells.

The protein resides in the cell membrane. Functionally, part of the TCR-CD3 complex present on T-lymphocyte cell surface that plays an essential role in adaptive immune response. When antigen presenting cells (APCs) activate T-cell receptor (TCR), TCR-mediated signals are transmitted across the cell membrane by the CD3 chains CD3D, CD3E, CD3G and CD3Z. All CD3 chains contain immunoreceptor tyrosine-based activation motifs (ITAMs) in their cytoplasmic domain. Upon TCR engagement, these motifs become phosphorylated by Src family protein tyrosine kinases LCK and FYN, resulting in the activation of downstream signaling pathways. In addition of this role of signal transduction in T-cell activation, CD3D plays an essential role in thymocyte differentiation. Indeed, participates in correct intracellular TCR-CD3 complex assembly and surface expression. In absence of a functional TCR-CD3 complex, thymocytes are unable to differentiate properly. Interacts with CD4 and CD8 and thus serves to establish a functional link between the TCR and coreceptors CD4 and CD8, which is needed for activation and positive selection of CD4 or CD8 T-cells. The protein is T-cell surface glycoprotein CD3 delta chain (CD3D) of Homo sapiens (Human).